We begin with the raw amino-acid sequence, 170 residues long: ATP synthase subunit b (170 aa).

A helical membrane pass occupies residues 25–45 (LIPNGTFFAVLIIFLIVLGVI). The tract at residues 121 to 147 (EVAQTLTQADQQLSAQGDQVRSGLESS) is disordered. The segment covering 122 to 139 (VAQTLTQADQQLSAQGDQ) has biased composition (polar residues).

The protein belongs to the ATPase B chain family. As to quaternary structure, F-type ATPases have 2 components, F(1) - the catalytic core - and F(0) - the membrane proton channel. F(1) has five subunits: alpha(3), beta(3), gamma(1), delta(1), epsilon(1). F(0) has three main subunits: a(1), b(2) and c(10-14). The alpha and beta chains form an alternating ring which encloses part of the gamma chain. F(1) is attached to F(0) by a central stalk formed by the gamma and epsilon chains, while a peripheral stalk is formed by the delta and b chains.

It is found in the cell membrane. Functionally, f(1)F(0) ATP synthase produces ATP from ADP in the presence of a proton or sodium gradient. F-type ATPases consist of two structural domains, F(1) containing the extramembraneous catalytic core and F(0) containing the membrane proton channel, linked together by a central stalk and a peripheral stalk. During catalysis, ATP synthesis in the catalytic domain of F(1) is coupled via a rotary mechanism of the central stalk subunits to proton translocation. Component of the F(0) channel, it forms part of the peripheral stalk, linking F(1) to F(0). The protein is ATP synthase subunit b of Mycolicibacterium smegmatis (strain ATCC 700084 / mc(2)155) (Mycobacterium smegmatis).